The following is a 133-amino-acid chain: Small ribosomal subunit protein eS24y (133 aa).

Positions 104–133 (KSRKQIKERKNRAKKIRGVKKTKAGDTKKK) are disordered. A compositionally biased stretch (basic residues) spans 109–125 (IKERKNRAKKIRGVKKT).

Belongs to the eukaryotic ribosomal protein eS24 family.

The chain is Small ribosomal subunit protein eS24y (RPS24B) from Arabidopsis thaliana (Mouse-ear cress).